A 635-amino-acid polypeptide reads, in one-letter code: MAPKKNKAAKKSKADINEMTIMVEDSPSNKINGLNTLLEGGNGFSCISTEVTDPVYAPNLLEGLGHMRQDSFLCDLTVATKSKSFDVHKVVMASCSEYIQNMLRKDPSLKKIELSDLSPVGLATVITYAYSGKLTLSLYTIGSTISAALLLQIHTLVKMCSDFLMRETSVENCMYVVNIADTYNLKETKEAAQKFMRENFIEFSEMEQFLKLTYEQINEFLTDDSLQLPSELTAFQIAVKWLDFDEKRLKYAPDLLSNIRFGTITPQDLVSHVQNVPRMMQDAECHRLLVDAMNYHLLPFQQNILQSRRTKVRGGLRVLLTVGGRPALTEKSLSKDILYRDEDNVWNKLTEMPAKSFNQCVAVLDGFLYVAGGEDQNDARNQAKHAVSNFSRYDPRFNTWIHLANMIQKRTHFSLNTFNGLLFAVGGRNSDGCQASVECYVPSSNQWQMKAPMEVPRCCHASSVIDGKILVSGGYINNAYSRAVCSYDPSTDSWQDKNSLSSPRGWHCSVTVGDRAYVLGGSQLGGRGERVDVLPVECYNPHSGQWSYVAPLLTGVSTAGAATLNNKIYLLGGWNEIEKKYKKCIQVYNPDLNEWTEDDELPEATVGISCCVVTIPTRKTRESRASSVSSAPVSI.

Residues cysteine 74–leucine 138 form the BTB domain. The BACK domain maps to cysteine 173–glutamine 274. 6 Kelch repeats span residues valine 318–glycine 366, phenylalanine 367–glycine 420, leucine 421–glycine 467, isoleucine 469–aspartate 514, alanine 516–asparagine 566, and lysine 567–isoleucine 615.

In terms of tissue distribution, strongly expressed in fast skeletal muscle, and weakly in heart. Not expressed in other tissues.

This chain is Kelch-like protein 31 (klhl31), found in Danio rerio (Zebrafish).